The sequence spans 97 residues: Anti-sigma-YlaC factor YlaD (97 aa).

Residues His29, Cys33, and Cys36 each contribute to the Zn(2+) site. A helical transmembrane segment spans residues 71-93 (YYGLLIMKAACWFGAAVAMMLII).

The protein belongs to the zinc-associated anti-sigma factor (ZAS) superfamily. Zn(2+) serves as cofactor.

The protein localises to the cell membrane. In terms of biological role, anti-sigma factor for YlaC. This Bacillus subtilis (strain 168) protein is Anti-sigma-YlaC factor YlaD (ylaD).